Reading from the N-terminus, the 201-residue chain is Elongation factor Ts (201 aa).

The involved in Mg(2+) ion dislocation from EF-Tu stretch occupies residues 81 to 84; sequence TDFV.

It belongs to the EF-Ts family.

The protein localises to the cytoplasm. Associates with the EF-Tu.GDP complex and induces the exchange of GDP to GTP. It remains bound to the aminoacyl-tRNA.EF-Tu.GTP complex up to the GTP hydrolysis stage on the ribosome. The polypeptide is Elongation factor Ts (Syntrophus aciditrophicus (strain SB)).